We begin with the raw amino-acid sequence, 527 residues long: 4-alpha-glucanotransferase (527 aa).

The protein belongs to the disproportionating enzyme family.

The protein localises to the cytoplasm. The enzyme catalyses Transfers a segment of a (1-&gt;4)-alpha-D-glucan to a new position in an acceptor, which may be glucose or a (1-&gt;4)-alpha-D-glucan.. This is 4-alpha-glucanotransferase (malQ) from Chlamydia trachomatis serovar D (strain ATCC VR-885 / DSM 19411 / UW-3/Cx).